We begin with the raw amino-acid sequence, 504 residues long: Maturase K (504 aa).

This sequence belongs to the intron maturase 2 family. MatK subfamily.

The protein resides in the plastid. Its subcellular location is the chloroplast. Functionally, usually encoded in the trnK tRNA gene intron. Probably assists in splicing its own and other chloroplast group II introns. The polypeptide is Maturase K (Chimaphila umbellata (Pipsissewa)).